The following is a 448-amino-acid chain: Asparagine--tRNA ligase (448 aa).

Belongs to the class-II aminoacyl-tRNA synthetase family. In terms of assembly, homodimer.

The protein localises to the cytoplasm. It catalyses the reaction tRNA(Asn) + L-asparagine + ATP = L-asparaginyl-tRNA(Asn) + AMP + diphosphate + H(+). This chain is Asparagine--tRNA ligase, found in Streptococcus thermophilus (strain ATCC BAA-491 / LMD-9).